Here is a 218-residue protein sequence, read N- to C-terminus: MKIFLDTANLEEIKKGVEWGIVDGVTTNPTLISKEGAEFKQRVKEICDLVKGPVSAEVVSLDYEGMVREARELAQISEYVVIKIPMTPDGIKAVKTLSAEGIKTNVTLVFSPAQAILAAKAGATYVSPFVGRMDDLSNDGMRMLGEIVEIYNNYGFETEIIAASIRHPMHVVEAALMGVDIVTMPFAVLEKLFKHPMTDLGIERFMEDWKKYLENLKK.

Residue lysine 83 is the Schiff-base intermediate with substrate of the active site.

This sequence belongs to the transaldolase family. Type 3B subfamily.

It is found in the cytoplasm. It catalyses the reaction D-sedoheptulose 7-phosphate + D-glyceraldehyde 3-phosphate = D-erythrose 4-phosphate + beta-D-fructose 6-phosphate. The protein operates within carbohydrate degradation; pentose phosphate pathway; D-glyceraldehyde 3-phosphate and beta-D-fructose 6-phosphate from D-ribose 5-phosphate and D-xylulose 5-phosphate (non-oxidative stage): step 2/3. Its function is as follows. Transaldolase is important for the balance of metabolites in the pentose-phosphate pathway. Does not show fructose-6-P aldolase activity. The protein is Transaldolase (tal) of Thermotoga maritima (strain ATCC 43589 / DSM 3109 / JCM 10099 / NBRC 100826 / MSB8).